Consider the following 253-residue polypeptide: Indole-3-glycerol phosphate synthase (253 aa).

The protein belongs to the TrpC family.

The enzyme catalyses 1-(2-carboxyphenylamino)-1-deoxy-D-ribulose 5-phosphate + H(+) = (1S,2R)-1-C-(indol-3-yl)glycerol 3-phosphate + CO2 + H2O. The protein operates within amino-acid biosynthesis; L-tryptophan biosynthesis; L-tryptophan from chorismate: step 4/5. In Bacillus cereus (strain ZK / E33L), this protein is Indole-3-glycerol phosphate synthase.